Reading from the N-terminus, the 56-residue chain is Ovomucoid (56 aa).

In terms of domain architecture, Kazal-like spans valine 6–cysteine 56. Cystine bridges form between cysteine 8-cysteine 38, cysteine 16-cysteine 35, and cysteine 24-cysteine 56. Asparagine 45 carries an N-linked (GlcNAc...) asparagine glycan.

The protein localises to the secreted. This is Ovomucoid from Penelope jacquacu (Spix's guan).